A 432-amino-acid chain; its full sequence is Glutamate-1-semialdehyde 2,1-aminomutase (432 aa).

Position 271 is an N6-(pyridoxal phosphate)lysine (Lys271).

The protein belongs to the class-III pyridoxal-phosphate-dependent aminotransferase family. HemL subfamily. Homodimer. The cofactor is pyridoxal 5'-phosphate.

Its subcellular location is the cytoplasm. The catalysed reaction is (S)-4-amino-5-oxopentanoate = 5-aminolevulinate. Its pathway is porphyrin-containing compound metabolism; protoporphyrin-IX biosynthesis; 5-aminolevulinate from L-glutamyl-tRNA(Glu): step 2/2. The protein operates within porphyrin-containing compound metabolism; chlorophyll biosynthesis. The sequence is that of Glutamate-1-semialdehyde 2,1-aminomutase from Prochlorococcus marinus (strain MIT 9211).